A 462-amino-acid polypeptide reads, in one-letter code: Probable Xaa-Pro aminopeptidase pepP (462 aa).

Residues D259, D270, E393, and E433 each contribute to the Mn(2+) site.

Belongs to the peptidase M24B family. Requires Mn(2+) as cofactor.

The enzyme catalyses Release of any N-terminal amino acid, including proline, that is linked to proline, even from a dipeptide or tripeptide.. Functionally, catalyzes the removal of a penultimate prolyl residue from the N-termini of peptides. In Metarhizium robertsii (strain ARSEF 23 / ATCC MYA-3075) (Metarhizium anisopliae (strain ARSEF 23)), this protein is Probable Xaa-Pro aminopeptidase pepP (pepP).